A 1077-amino-acid polypeptide reads, in one-letter code: Carbamoyl phosphate synthase large chain (1077 aa).

Residues 2–403 (PKRTDIKSIL…SLQKALRGLE (402 aa)) are carboxyphosphate synthetic domain. Residues arginine 129, arginine 169, glycine 175, glycine 176, glutamate 208, leucine 210, glutamate 215, glycine 241, isoleucine 242, histidine 243, glutamine 285, and glutamate 299 each contribute to the ATP site. An ATP-grasp 1 domain is found at 133–328 (DIAMKKIGLD…IAKIAAKLAV (196 aa)). Mg(2+) is bound by residues glutamine 285, glutamate 299, and asparagine 301. Positions 285, 299, and 301 each coordinate Mn(2+). The oligomerization domain stretch occupies residues 404 to 553 (VGATGFDPKV…YSTYEEECES (150 aa)). The tract at residues 554-936 (NPTSDRPKVM…AFSKAMLGSQ (383 aa)) is carbamoyl phosphate synthetic domain. The ATP-grasp 2 domain maps to 679–870 (QQAVNRLGLK…LAKIAARVMV (192 aa)). ATP-binding residues include arginine 715, arginine 754, leucine 756, glutamate 761, glycine 786, valine 787, histidine 788, serine 789, glutamine 829, and glutamate 841. 3 residues coordinate Mg(2+): glutamine 829, glutamate 841, and asparagine 843. Glutamine 829, glutamate 841, and asparagine 843 together coordinate Mn(2+). In terms of domain architecture, MGS-like spans 937–1077 (SGMKKSGRAL…MHAKIKNMKA (141 aa)). The allosteric domain stretch occupies residues 937–1077 (SGMKKSGRAL…MHAKIKNMKA (141 aa)).

It belongs to the CarB family. As to quaternary structure, composed of two chains; the small (or glutamine) chain promotes the hydrolysis of glutamine to ammonia, which is used by the large (or ammonia) chain to synthesize carbamoyl phosphate. Tetramer of heterodimers (alpha,beta)4. Mg(2+) serves as cofactor. Requires Mn(2+) as cofactor.

The enzyme catalyses hydrogencarbonate + L-glutamine + 2 ATP + H2O = carbamoyl phosphate + L-glutamate + 2 ADP + phosphate + 2 H(+). It carries out the reaction hydrogencarbonate + NH4(+) + 2 ATP = carbamoyl phosphate + 2 ADP + phosphate + 2 H(+). The protein operates within amino-acid biosynthesis; L-arginine biosynthesis; carbamoyl phosphate from bicarbonate: step 1/1. It participates in pyrimidine metabolism; UMP biosynthesis via de novo pathway; (S)-dihydroorotate from bicarbonate: step 1/3. Its function is as follows. Large subunit of the glutamine-dependent carbamoyl phosphate synthetase (CPSase). CPSase catalyzes the formation of carbamoyl phosphate from the ammonia moiety of glutamine, carbonate, and phosphate donated by ATP, constituting the first step of 2 biosynthetic pathways, one leading to arginine and/or urea and the other to pyrimidine nucleotides. The large subunit (synthetase) binds the substrates ammonia (free or transferred from glutamine from the small subunit), hydrogencarbonate and ATP and carries out an ATP-coupled ligase reaction, activating hydrogencarbonate by forming carboxy phosphate which reacts with ammonia to form carbamoyl phosphate. The sequence is that of Carbamoyl phosphate synthase large chain from Yersinia pestis.